The following is a 390-amino-acid chain: NADH-quinone oxidoreductase subunit D (390 aa).

This sequence belongs to the complex I 49 kDa subunit family. As to quaternary structure, NDH-1 is composed of 14 different subunits. Subunits NuoB, C, D, E, F, and G constitute the peripheral sector of the complex.

The protein resides in the cell inner membrane. The catalysed reaction is a quinone + NADH + 5 H(+)(in) = a quinol + NAD(+) + 4 H(+)(out). Functionally, NDH-1 shuttles electrons from NADH, via FMN and iron-sulfur (Fe-S) centers, to quinones in the respiratory chain. The immediate electron acceptor for the enzyme in this species is believed to be ubiquinone. Couples the redox reaction to proton translocation (for every two electrons transferred, four hydrogen ions are translocated across the cytoplasmic membrane), and thus conserves the redox energy in a proton gradient. The polypeptide is NADH-quinone oxidoreductase subunit D (Geobacter metallireducens (strain ATCC 53774 / DSM 7210 / GS-15)).